The sequence spans 159 residues: Aspartate carbamoyltransferase regulatory chain (159 aa).

4 residues coordinate Zn(2+): Cys113, Cys118, Cys142, and Cys145.

The protein belongs to the PyrI family. In terms of assembly, contains catalytic and regulatory chains. The cofactor is Zn(2+).

In terms of biological role, involved in allosteric regulation of aspartate carbamoyltransferase. The sequence is that of Aspartate carbamoyltransferase regulatory chain from Saccharolobus islandicus (strain Y.N.15.51 / Yellowstone #2) (Sulfolobus islandicus).